We begin with the raw amino-acid sequence, 227 residues long: Cytochrome c oxidase subunit 2 (227 aa).

The Mitochondrial intermembrane portion of the chain corresponds to 1 to 14 (MAYPFQLGLQDATS). Residues 15–45 (PIMEELMNFHDHTLMIVFLISSLVLYIISLM) form a helical membrane-spanning segment. Residues 46-59 (LTTKLTHTSTMDAQ) lie on the Mitochondrial matrix side of the membrane. A helical transmembrane segment spans residues 60-87 (EVETIWTILPAVILILIALPSLRILYMM). The Mitochondrial intermembrane segment spans residues 88-227 (DEINNPVLTV…NFENWSTSMI (140 aa)). Cu cation contacts are provided by His161, Cys196, Glu198, Cys200, His204, and Met207. Glu198 serves as a coordination point for Mg(2+).

It belongs to the cytochrome c oxidase subunit 2 family. Component of the cytochrome c oxidase (complex IV, CIV), a multisubunit enzyme composed of 14 subunits. The complex is composed of a catalytic core of 3 subunits MT-CO1, MT-CO2 and MT-CO3, encoded in the mitochondrial DNA, and 11 supernumerary subunits COX4I, COX5A, COX5B, COX6A, COX6B, COX6C, COX7A, COX7B, COX7C, COX8 and NDUFA4, which are encoded in the nuclear genome. The complex exists as a monomer or a dimer and forms supercomplexes (SCs) in the inner mitochondrial membrane with NADH-ubiquinone oxidoreductase (complex I, CI) and ubiquinol-cytochrome c oxidoreductase (cytochrome b-c1 complex, complex III, CIII), resulting in different assemblies (supercomplex SCI(1)III(2)IV(1) and megacomplex MCI(2)III(2)IV(2)). Found in a complex with TMEM177, COA6, COX18, COX20, SCO1 and SCO2. Interacts with TMEM177 in a COX20-dependent manner. Interacts with COX20. Interacts with COX16. Requires Cu cation as cofactor.

It localises to the mitochondrion inner membrane. The enzyme catalyses 4 Fe(II)-[cytochrome c] + O2 + 8 H(+)(in) = 4 Fe(III)-[cytochrome c] + 2 H2O + 4 H(+)(out). Component of the cytochrome c oxidase, the last enzyme in the mitochondrial electron transport chain which drives oxidative phosphorylation. The respiratory chain contains 3 multisubunit complexes succinate dehydrogenase (complex II, CII), ubiquinol-cytochrome c oxidoreductase (cytochrome b-c1 complex, complex III, CIII) and cytochrome c oxidase (complex IV, CIV), that cooperate to transfer electrons derived from NADH and succinate to molecular oxygen, creating an electrochemical gradient over the inner membrane that drives transmembrane transport and the ATP synthase. Cytochrome c oxidase is the component of the respiratory chain that catalyzes the reduction of oxygen to water. Electrons originating from reduced cytochrome c in the intermembrane space (IMS) are transferred via the dinuclear copper A center (CU(A)) of subunit 2 and heme A of subunit 1 to the active site in subunit 1, a binuclear center (BNC) formed by heme A3 and copper B (CU(B)). The BNC reduces molecular oxygen to 2 water molecules using 4 electrons from cytochrome c in the IMS and 4 protons from the mitochondrial matrix. The protein is Cytochrome c oxidase subunit 2 (MT-CO2) of Apodemus mystacinus (Broad-toothed field mouse).